We begin with the raw amino-acid sequence, 296 residues long: uncharacterized protein (296 aa).

The next 2 helical transmembrane spans lie at 82-102 (VVAP…WSVQ) and 117-137 (ISVL…SAIF).

The protein localises to the cell membrane. This is an uncharacterized protein from Sinorhizobium fredii (strain NBRC 101917 / NGR234).